The sequence spans 272 residues: Probable protein VP2 (272 aa).

Disordered regions lie at residues 50–116 and 195–272; these read GGSR…DFAD and YSPA…SSSS. Residues 78–90 are compositionally biased toward pro residues; that stretch reads APDPPAGNQPPAL. Residues 94–108 are compositionally biased toward gly residues; it reads GDGGNESGAGGGESG. Over residues 218-230 the composition is skewed to basic and acidic residues; that stretch reads SKRDNKENRDRGR. Over residues 231 to 246 the composition is skewed to basic residues; sequence AKARAKQKPKKRRRRA. A compositionally biased stretch (low complexity) spans 249–272; that stretch reads ESSSSSSSKSSFNSEEGSSASSSS.

Phosphorylated at C-terminal serines.

This is Probable protein VP2 from Homo sapiens (Human).